The primary structure comprises 270 residues: Glutamate racemase (270 aa).

Residues 14–15 (DS) and 46–47 (YG) contribute to the substrate site. Cys-77 serves as the catalytic Proton donor/acceptor. 78-79 (NT) lines the substrate pocket. Cys-189 functions as the Proton donor/acceptor in the catalytic mechanism. Position 190–191 (190–191 (TH)) interacts with substrate.

Belongs to the aspartate/glutamate racemases family.

It carries out the reaction L-glutamate = D-glutamate. It functions in the pathway cell wall biogenesis; peptidoglycan biosynthesis. Functionally, provides the (R)-glutamate required for cell wall biosynthesis. The chain is Glutamate racemase from Neisseria meningitidis serogroup C.